A 276-amino-acid chain; its full sequence is MRIRFSKMHGLGNDFVVIDGISQTVRLTPEKIRKLADRHFGVGCDQVLLVEIPEQPNVDFRYRIFNCDGSEVENCGNGARCFAVFVRERRLTGKRVIRVETAGGIIELRVQDDEQVSVDMGVPRLLPEKIPFVADQQAVTYPLDVAGQVCSISAVSMGNPHAVMLVDDVKSAPVGQLGPLVENHPRFPARVNAGFLQVVSRDEINLRVYERGAGETLACGTGACAAVVTGRLRGLLNDTVKVNLPGGSLRISWPGEGHSVIMTGPAVTVFHGQIKL.

Residues Asn-13, Gln-46, and Asn-66 each coordinate substrate. The active-site Proton donor is the Cys-75. Substrate-binding positions include 76 to 77 (GN), Asn-159, Asn-192, and 210 to 211 (ER). Catalysis depends on Cys-219, which acts as the Proton acceptor. 220–221 (GT) contributes to the substrate binding site.

It belongs to the diaminopimelate epimerase family. In terms of assembly, homodimer.

It localises to the cytoplasm. The catalysed reaction is (2S,6S)-2,6-diaminopimelate = meso-2,6-diaminopimelate. It functions in the pathway amino-acid biosynthesis; L-lysine biosynthesis via DAP pathway; DL-2,6-diaminopimelate from LL-2,6-diaminopimelate: step 1/1. Catalyzes the stereoinversion of LL-2,6-diaminopimelate (L,L-DAP) to meso-diaminopimelate (meso-DAP), a precursor of L-lysine and an essential component of the bacterial peptidoglycan. In Cellvibrio japonicus (strain Ueda107) (Pseudomonas fluorescens subsp. cellulosa), this protein is Diaminopimelate epimerase.